A 249-amino-acid chain; its full sequence is Chitooligosaccharide deacetylase (249 aa).

Residues His61 and His125 each contribute to the Mg(2+) site.

It belongs to the YdjC deacetylase family. ChbG subfamily. In terms of assembly, homodimer. Mg(2+) is required as a cofactor.

It is found in the cytoplasm. The catalysed reaction is N,N'-diacetylchitobiose + H2O = N-acetyl-beta-D-glucosaminyl-(1-&gt;4)-D-glucosamine + acetate. It catalyses the reaction diacetylchitobiose-6'-phosphate + H2O = N'-monoacetylchitobiose-6'-phosphate + acetate. It functions in the pathway glycan degradation; chitin degradation. Involved in the degradation of chitin. ChbG is essential for growth on the acetylated chitooligosaccharides chitobiose and chitotriose but is dispensable for growth on cellobiose and chitosan dimer, the deacetylated form of chitobiose. Deacetylation of chitobiose-6-P and chitotriose-6-P is necessary for both the activation of the chb promoter by the regulatory protein ChbR and the hydrolysis of phosphorylated beta-glucosides by the phospho-beta-glucosidase ChbF. Catalyzes the removal of only one acetyl group from chitobiose-6-P to yield monoacetylchitobiose-6-P, the inducer of ChbR and the substrate of ChbF. This chain is Chitooligosaccharide deacetylase, found in Escherichia coli O17:K52:H18 (strain UMN026 / ExPEC).